The primary structure comprises 399 residues: Mycinamicin VI 2''-O-methyltransferase (399 aa).

S-adenosyl-L-methionine contacts are provided by residues T173, 202 to 208 (EIGVGGY), S217, D234, 252 to 253 (DQ), and D275. D275 contacts Mg(2+). Catalysis depends on H278, which acts as the Proton acceptor. Mg(2+) is bound by residues E303 and D304.

The protein belongs to the methyltransferase OleY/MycE family. As to quaternary structure, homotetramer. The cofactor is Mg(2+).

It catalyses the reaction mycinamicin VI + S-adenosyl-L-methionine = mycinamicin III + S-adenosyl-L-homocysteine + H(+). Its pathway is antibiotic biosynthesis; mycinamicin biosynthesis. O-methyltransferase that catalyzes the conversion of mycinamicin VI to mycinamicin III in the biosynthesis of mycinamicin, a 16-membered macrolide antibiotic. The chain is Mycinamicin VI 2''-O-methyltransferase (mycE) from Micromonospora griseorubida.